We begin with the raw amino-acid sequence, 753 residues long: Protein-lysine N-methyltransferase SMYD4 (753 aa).

112 to 114 is an S-adenosyl-L-methionine binding site; sequence RSA. The region spanning 186 to 528 is the SET domain; that stretch reads DGVSVYFSSD…AGQEILHCYG (343 aa). Zn(2+)-binding residues include Cys-246, Cys-249, Cys-259, Cys-262, Cys-268, Cys-272, His-281, and Cys-285. Residues 246-285 form an MYND-type zinc finger; sequence CHHCLSQSLSFVPCPKCSYARYCGESCQKDAWDQWHQWEC. Residues 467-468 and Tyr-527 each bind S-adenosyl-L-methionine; that span reads NH.

This sequence belongs to the class V-like SAM-binding methyltransferase superfamily.

It is found in the nucleus. It localises to the cytoplasm. It carries out the reaction L-lysyl-[protein] + S-adenosyl-L-methionine = N(6)-methyl-L-lysyl-[protein] + S-adenosyl-L-homocysteine + H(+). Its function is as follows. Protein-lysine N-methyltransferase. Monomethylates PRMT5, modulating its transcriptional activity. May also act as a histone methyltransferase. Plays a critical role in cardiac development. Acts as a key epigenetic regulator of gene expression during cardiac development via its dual activities as a methyltransferase and negative regulator of HDAC1. The polypeptide is Protein-lysine N-methyltransferase SMYD4 (smyd4) (Danio rerio (Zebrafish)).